The following is a 497-amino-acid chain: Carboxylesterase (497 aa).

Ser-185 acts as the Acyl-ester intermediate in catalysis. Active-site charge relay system residues include Glu-319 and His-415.

The protein belongs to the type-B carboxylesterase/lipase family.

The protein resides in the secreted. It carries out the reaction a carboxylic ester + H2O = an alcohol + a carboxylate + H(+). This is Carboxylesterase from Thermobifida fusca (Thermomonospora fusca).